The following is a 351-amino-acid chain: Histidinol-phosphate aminotransferase (351 aa).

Lysine 214 is subject to N6-(pyridoxal phosphate)lysine.

Belongs to the class-II pyridoxal-phosphate-dependent aminotransferase family. Histidinol-phosphate aminotransferase subfamily. Pyridoxal 5'-phosphate is required as a cofactor.

It carries out the reaction L-histidinol phosphate + 2-oxoglutarate = 3-(imidazol-4-yl)-2-oxopropyl phosphate + L-glutamate. The protein operates within amino-acid biosynthesis; L-histidine biosynthesis; L-histidine from 5-phospho-alpha-D-ribose 1-diphosphate: step 7/9. The chain is Histidinol-phosphate aminotransferase from Methanosphaerula palustris (strain ATCC BAA-1556 / DSM 19958 / E1-9c).